Here is a 445-residue protein sequence, read N- to C-terminus: Cryptochrome DASH (445 aa).

Residues 4–137 form the Photolyase/cryptochrome alpha/beta domain; that stretch reads KIGLYWFTFD…VIVQHSVRSL (134 aa).

It belongs to the DNA photolyase class-1 family. Requires FAD as cofactor. It depends on (6R)-5,10-methylene-5,6,7,8-tetrahydrofolate as a cofactor.

Its function is as follows. May have a photoreceptor function. Binds DNA; probably functions as a transcriptional repressor. This is Cryptochrome DASH (cry) from Vibrio parahaemolyticus serotype O3:K6 (strain RIMD 2210633).